The following is a 154-amino-acid chain: Iron-sulfur cluster assembly 2 homolog, mitochondrial (154 aa).

A mitochondrion-targeting transit peptide spans 1–8 (MAAARGLS). Residues C79, C144, and C146 each contribute to the Fe cation site.

The protein belongs to the HesB/IscA family. In terms of assembly, heterotetramer; forms a dimer of dimers with IBA57. Interacts with [2Fe-2S]-ISCA2 forming the heterodimer [2Fe- 2S]-ISCA2-IBA57 complex; [2Fe-2S] cluster binding is absolutely required to promote the complex formation.

It localises to the mitochondrion. Functionally, involved in the maturation of mitochondrial 4Fe-4S proteins functioning late in the iron-sulfur cluster assembly pathway. May be involved in the binding of an intermediate of Fe/S cluster assembly. This Pongo abelii (Sumatran orangutan) protein is Iron-sulfur cluster assembly 2 homolog, mitochondrial (ISCA2).